The following is a 286-amino-acid chain: Flagellin FlaB1 (286 aa).

The tract at residues 231 to 286 (LDIAAENLQAAESRIRDANIAKQMVEYTKNQVLTQSGTAMLAQANTSAQSILSILR) is required for interaction with FliW.

It belongs to the bacterial flagellin family. In terms of assembly, the flagellum consists of an outer layer composed of repeating units of FlaA around a core that contains several antigenically related polypeptides. Interacts via its C-terminus with FliW; a synthetic peptide of residues 229-247 partially blocks binding to FliW.

It localises to the periplasmic flagellum. It is found in the periplasm. Its function is as follows. Component of the core of the flagella. The sequence is that of Flagellin FlaB1 (flaB1) from Treponema pallidum (strain Nichols).